Reading from the N-terminus, the 421-residue chain is MFEPVLLRNVDVPDGHLLSTYEAGGGYRALRKALGEYTPDEIVELVKESNLRGRGGAGFPTGMKWSFVPKAAGKPKYLCCNADEGEPGTFKDRIIMERDPHQLIEGLAVSAYAIGAETAYVYIRGEYVTAIRRMEQAIAEAHENGYLGIGILGSGFNFMVHIHRGAGAYICGEETAMLESLEGKRAQPRLKPPFPAVAGLYASPTVINNVETLACVPHIVMRGSAWFRGIGPDRSPGPKLYCLSGQVRKPGLYELPMGISLRELVEEHAGGPLPGRKVKAVIPGGVSAPVIPEGELEVGMDFDSLTAAGSMLGSAGVVVIDDSTCMVKLATRIIEFFHHESCGKCTPCREGLDWTVKVLRRIEAGEGETGDLEQLEMLCKGIFGNTFCALGDGAAMGLRAALKHFRAEFVAHIEERRCPFH.

53-62 (GRGGAGFPTG) serves as a coordination point for NAD(+). 165 to 212 (GAGAYICGEETAMLESLEGKRAQPRLKPPFPAVAGLYASPTVINNVET) contributes to the FMN binding site. [4Fe-4S] cluster is bound by residues Cys-342, Cys-345, Cys-348, and Cys-388.

The protein belongs to the complex I 51 kDa subunit family. FMN serves as cofactor. Requires [4Fe-4S] cluster as cofactor.

The enzyme catalyses a quinone + NADH + 5 H(+)(in) = a quinol + NAD(+) + 4 H(+)(out). Functionally, NDH-1 shuttles electrons from NADH, via FMN and iron-sulfur (Fe-S) centers, to quinones in the respiratory chain. The immediate electron acceptor for the enzyme in this species is believed to be ubiquinone. Couples the redox reaction to proton translocation (for every two electrons transferred, four hydrogen ions are translocated across the cytoplasmic membrane), and thus conserves the redox energy in a proton gradient. The chain is NADH-quinone oxidoreductase subunit F 2 (nuoF2) from Rhizobium meliloti (strain 1021) (Ensifer meliloti).